We begin with the raw amino-acid sequence, 201 residues long: FMN reductase (NADH) RutF (201 aa).

Positions 169 to 201 (APRSGAAPAEPARAARALGARPAEGPALALRSA) are disordered.

It belongs to the non-flavoprotein flavin reductase family. RutF subfamily.

It carries out the reaction FMNH2 + NAD(+) = FMN + NADH + 2 H(+). Functionally, catalyzes the reduction of FMN to FMNH2 which is used to reduce pyrimidine by RutA via the Rut pathway. The chain is FMN reductase (NADH) RutF from Methylorubrum extorquens (strain ATCC 14718 / DSM 1338 / JCM 2805 / NCIMB 9133 / AM1) (Methylobacterium extorquens).